A 471-amino-acid polypeptide reads, in one-letter code: Membrane-associated sulfotransferase kil1 (471 aa).

Topologically, residues 1–12 (MSTTSMILTKKN) are cytoplasmic. A helical; Signal-anchor for type II membrane protein transmembrane segment spans residues 13-33 (IIILSIIIITIIAYQFYITSP). Residues 34 to 471 (QSFPSSNTIT…LLNRDFKWQN (438 aa)) are Lumenal-facing. An N-linked (GlcNAc...) asparagine glycan is attached at N47. Low complexity-rich tracts occupy residues 89–105 (NQNE…NNNK) and 112–127 (NNNN…NNNN). A disordered region spans residues 89–127 (NQNENQNQINNEYNNNKLNDEQENNNNNNYNNNNNNNNN). 3'-phosphoadenylyl sulfate-binding positions include 167 to 172 (KSGTTF), R252, and S260. 2 N-linked (GlcNAc...) asparagine glycosylation sites follow: N324 and N344. Y348 is a binding site for 3'-phosphoadenylyl sulfate.

The protein belongs to the sulfotransferase 1 family.

Its subcellular location is the membrane. Functionally, sulfotransferase involved in intracellular killing of bacteria. The sequence is that of Membrane-associated sulfotransferase kil1 (kil1) from Dictyostelium discoideum (Social amoeba).